A 343-amino-acid chain; its full sequence is MELAFIPSPSRGVLHLGPVPLRGYAFCIIIGVFVAVWLGNKRWVARGGRPGTVADIAVWAVPFGLIGGRLYHVITDYQLYFSEGRDWVDAFKIWEGGLGIWGAIAFGAVGAWIGARRRGVPMPAYADAVAPGIALAQAIGRWGNWFNQELYGKATDLPWAVEITSTADGRVPGTYHPTFLYESLWCIGVALLVIWADRRFKLGHGRAFALYVAAYCAGRFWIEYMRVDDAHHILGLRLNNWTALFVFLLAVLYIVLSARKRPGREAVVEPGAETAAGDSGSAADKDVKGTKDAEDAEGAEDGAEKTDASGATEAPEDTSGADEADAAKDAEGVTNGADSAKKG.

The next 4 membrane-spanning stretches (helical) occupy residues 19-39 (VPLR…VWLG), 54-74 (ADIA…YHVI), 93-113 (IWEG…GAWI), and 119-139 (GVPM…AQAI). Arginine 141 lines the a 1,2-diacyl-sn-glycero-3-phospho-(1'-sn-glycerol) pocket. The next 3 membrane-spanning stretches (helical) occupy residues 176–196 (HPTF…VIWA), 202–224 (LGHG…WIEY), and 238–258 (LNNW…VLSA). The tract at residues 269–343 (EPGAETAAGD…TNGADSAKKG (75 aa)) is disordered. Residues 283–293 (ADKDVKGTKDA) are compositionally biased toward basic and acidic residues. A compositionally biased stretch (acidic residues) spans 314-324 (APEDTSGADEA).

This sequence belongs to the Lgt family.

It localises to the cell membrane. The enzyme catalyses L-cysteinyl-[prolipoprotein] + a 1,2-diacyl-sn-glycero-3-phospho-(1'-sn-glycerol) = an S-1,2-diacyl-sn-glyceryl-L-cysteinyl-[prolipoprotein] + sn-glycerol 1-phosphate + H(+). The protein operates within protein modification; lipoprotein biosynthesis (diacylglyceryl transfer). Its function is as follows. Catalyzes the transfer of the diacylglyceryl group from phosphatidylglycerol to the sulfhydryl group of the N-terminal cysteine of a prolipoprotein, the first step in the formation of mature lipoproteins. This Streptomyces coelicolor (strain ATCC BAA-471 / A3(2) / M145) protein is Phosphatidylglycerol--prolipoprotein diacylglyceryl transferase 1.